A 568-amino-acid polypeptide reads, in one-letter code: Glucose-6-phosphate isomerase, cytosolic (568 aa).

Glutamate 360 serves as the catalytic Proton donor. Residues histidine 391 and lysine 516 contribute to the active site.

This sequence belongs to the GPI family. Homodimer.

It is found in the cytoplasm. It catalyses the reaction alpha-D-glucose 6-phosphate = beta-D-fructose 6-phosphate. It functions in the pathway carbohydrate degradation; glycolysis; D-glyceraldehyde 3-phosphate and glycerone phosphate from D-glucose: step 2/4. The polypeptide is Glucose-6-phosphate isomerase, cytosolic (PGIC) (Oenothera sinuata var. hirsuta (Mexican evening primrose)).